The following is a 73-amino-acid chain: Guanine nucleotide-binding protein G(I)/G(S)/G(O) subunit gamma-11 (73 aa).

A disordered region spans residues 51–73 (DPLVKGIPEDKNPFKEKGSCVIS). Residue C70 is modified to Cysteine methyl ester. A lipid anchor (S-farnesyl cysteine) is attached at C70. Positions 71–73 (VIS) are cleaved as a propeptide — removed in mature form.

Belongs to the G protein gamma family. In terms of assembly, g proteins are composed of 3 units, alpha, beta and gamma. Interacts with beta-1 and beta-3, but not with beta-2. Abundantly expressed in all tissues tested except for brain.

Its subcellular location is the cell membrane. Functionally, guanine nucleotide-binding proteins (G proteins) are involved as a modulator or transducer in various transmembrane signaling systems. The beta and gamma chains are required for the GTPase activity, for replacement of GDP by GTP, and for G protein-effector interaction. The protein is Guanine nucleotide-binding protein G(I)/G(S)/G(O) subunit gamma-11 (GNG11) of Homo sapiens (Human).